The chain runs to 1121 residues: tRNA (34-2'-O)-methyltransferase regulator WDR6 (1121 aa).

The residue at position 1 (Met-1) is an N-acetylmethionine. WD repeat units lie at residues 53–97 (IKRV…VVKI), 105–143 (RELW…LYDP), 147–189 (CILQ…VWYP), 200–238 (APDR…IWKV), 247–285 (RVQN…VWSH), 289–327 (ILQA…LWHL), 335–376 (LGVS…LYDV), 381–422 (WEQL…VVPI), 425–470 (PTAA…ISAA), 476–520 (IFVK…LFPS), 559–598 (PVST…FVRD), 604–642 (VLRQ…VWNP), 645–684 (HEKL…LYRA), 739–785 (LTDI…VWGI), 848–893 (HNRH…LFLL), 901–946 (QLLA…FWDL), 970–1012 (GTPS…VFVL), 1036–1073 (EEYS…FWRL), and 1079–1121 (TFMN…NWYD).

It belongs to the WD repeat WDR6 family. In terms of assembly, interacts with FTSJ1; the interaction is direct, and required for 2'-O-methylation of position 34 in substrate tRNAs. Interacts with IRS4. Interacts with STK11/LKB1.

Its subcellular location is the cytoplasm. Its function is as follows. Together with methyltransferase FTSJ1, methylates the 2'-O-ribose of nucleotides at position 34 of the tRNA anticodon loop of substrate tRNAs. Required for the correct positioning of the substrate tRNA for methylation. Required to suppress amino acid starvation-induced autophagy. Enhances the STK11/LKB1-induced cell growth suppression activity. The chain is tRNA (34-2'-O)-methyltransferase regulator WDR6 (WDR6) from Pongo abelii (Sumatran orangutan).